The sequence spans 361 residues: MKKLLLIFLFSLVILQTACGFDYDDKEIESEEGLSTLYDRWRSHHSVPRSLNEREKRFNVFRHNVMHVHNTNKKNRSYKLKLNKFADLTINEFKNAYTGSNIKHHRMLQGPKRGSKQFMYDHENLSKLPSSVDWRKKGAVTEIKNQGKCGSCWAFSTVAAVEGINKIKTNKLVSLSEQELVDCDTKQNEGCNGGLMEIAFEFIKKNGGITTEDSYPYEGIDGKCDASKDNGVLVTIDGHEDVPENDENALLKAVANQPVSVAIDAGSSDFQFYSEGVFTGSCGTELNHGVAAVGYGSERGKKYWIVRNSWGAEWGEGGYIKIEREIDEPEGRCGIAMEASYPIKLSSSNPTPKDGDVKDEL.

Residues 1 to 20 (MKKLLLIFLFSLVILQTACG) form the signal peptide. A propeptide spans 21–127 (FDYDDKEIES…FMYDHENLSK (107 aa)) (activation peptide). N-linked (GlcNAc...) asparagine glycans are attached at residues asparagine 75 and asparagine 124. 3 cysteine pairs are disulfide-bonded: cysteine 149–cysteine 191, cysteine 183–cysteine 224, and cysteine 282–cysteine 333. Cysteine 152 is a catalytic residue. Catalysis depends on residues histidine 288 and asparagine 308. Residues 358 to 361 (KDEL) carry the Prevents secretion from ER motif.

Belongs to the peptidase C1 family. In terms of tissue distribution, expressed in roots, stems, rosette and cauline leaves, flowers, buds and green siliques. Found in the tip of young primary leaves, in very young root tips and at later stages in all tissues of lateral root, including the vascular bundle. Not expressed in lateral root primordia, while directly emerging through the epidermis.

Its subcellular location is the endoplasmic reticulum. Its function is as follows. Involved in the final stage of developmental programmed cell death and in intercalation of new cells. Cleaves extensins, thus probably supporting the final cell collapse. The polypeptide is KDEL-tailed cysteine endopeptidase CEP2 (Arabidopsis thaliana (Mouse-ear cress)).